The sequence spans 106 residues: Nucleoid-associated protein MCCL_1934 (106 aa).

Positions 1–34 (MRGGGNMQQMMKQMQKMQKKMAEEQEKLKEERIE) are disordered. Residues 7-16 (MQQMMKQMQK) are compositionally biased toward low complexity. Residues 20 to 34 (KMAEEQEKLKEERIE) show a composition bias toward basic and acidic residues.

This sequence belongs to the YbaB/EbfC family. In terms of assembly, homodimer.

Its subcellular location is the cytoplasm. It localises to the nucleoid. Binds to DNA and alters its conformation. May be involved in regulation of gene expression, nucleoid organization and DNA protection. The sequence is that of Nucleoid-associated protein MCCL_1934 from Macrococcus caseolyticus (strain JCSC5402) (Macrococcoides caseolyticum).